We begin with the raw amino-acid sequence, 319 residues long: MNEILFFSPQPLFSHMMNENSRVHTHSNLRHIFFSEIGIGISGNSFLLLFHILKFIHGHRSRLSDLPIGLLSLIHLLMLLVMAFIATDIFISWRGWDDIICKFLVYLYRVLRGLSLCTTSMLSVLQAIILSPRSSCLAKFKRKSLHHISCAILFLSVLYMLIGSQLLVSIIATPNLTTNDFIYVTQSCSILPLSYVMQSMFSTLLVIRDVFLISLMVLSTWYMVALLCRHRKKTQHLQGISLSPKTSPKQRATQTLLMLMSFFVLMTIYDTIVSCSRTMFLNDPTSYNMQIFVVHIYATVSPFVFMSTEKHIVNCLRSV.

The Extracellular portion of the chain corresponds to 1-31; sequence MNEILFFSPQPLFSHMMNENSRVHTHSNLRH. The helical transmembrane segment at 32–52 threads the bilayer; the sequence is IFFSEIGIGISGNSFLLLFHI. The Cytoplasmic portion of the chain corresponds to 53–65; it reads LKFIHGHRSRLSD. Residues 66-86 form a helical membrane-spanning segment; it reads LPIGLLSLIHLLMLLVMAFIA. The Extracellular portion of the chain corresponds to 87–109; sequence TDIFISWRGWDDIICKFLVYLYR. An intrachain disulfide couples cysteine 101 to cysteine 188. The chain crosses the membrane as a helical span at residues 110-130; the sequence is VLRGLSLCTTSMLSVLQAIIL. Residues 131 to 150 are Cytoplasmic-facing; that stretch reads SPRSSCLAKFKRKSLHHISC. The chain crosses the membrane as a helical span at residues 151–171; it reads AILFLSVLYMLIGSQLLVSII. Topologically, residues 172 to 203 are extracellular; the sequence is ATPNLTTNDFIYVTQSCSILPLSYVMQSMFST. An N-linked (GlcNAc...) asparagine glycan is attached at asparagine 175. The chain crosses the membrane as a helical span at residues 204–224; the sequence is LLVIRDVFLISLMVLSTWYMV. Over 225–254 the chain is Cytoplasmic; sequence ALLCRHRKKTQHLQGISLSPKTSPKQRATQ. A helical transmembrane segment spans residues 255 to 275; the sequence is TLLMLMSFFVLMTIYDTIVSC. Topologically, residues 276-285 are extracellular; sequence SRTMFLNDPT. The helical transmembrane segment at 286-306 threads the bilayer; it reads SYNMQIFVVHIYATVSPFVFM. Over 307 to 319 the chain is Cytoplasmic; the sequence is STEKHIVNCLRSV.

The protein belongs to the G-protein coupled receptor 1 family. In terms of tissue distribution, expressed in a subset of sensory neurons located in the apical layer of the vomeronasal organ.

The protein localises to the cell membrane. Its function is as follows. Putative pheromone receptor implicated in the regulation of social as well as reproductive behavior. The sequence is that of Vomeronasal type-1 receptor 51 (Vmn1r51) from Mus musculus (Mouse).